The sequence spans 188 residues: MSQAPEARPSPPSVYHERQRLELCAVHALNNVLQEQLFSQEAADEICKRLAPDSRLNPHRSLLGTGNYDVNVIMAALQGLGLAAVWWDRRRPLSQLALPQVLGLILNLPSPVSLGLLSLPLRRRHWVALRQVDGIYYNLDSKLRAPEALGDEDGVRTFLAAALAQGLCEVLLVVTKEVEEAGCWLNTS.

The region spanning 11 to 188 (PPSVYHERQR…EEAGCWLNTS (178 aa)) is the Josephin domain. The active-site Nucleophile is Cys24. His125 (proton acceptor) is an active-site residue.

The protein resides in the cytoplasm. Its subcellular location is the cytosol. It carries out the reaction Thiol-dependent hydrolysis of ester, thioester, amide, peptide and isopeptide bonds formed by the C-terminal Gly of ubiquitin (a 76-residue protein attached to proteins as an intracellular targeting signal).. Cleaves 'Lys-63'-linked poly-ubiquitin chains, and with lesser efficiency 'Lys-48'-linked poly-ubiquitin chains (in vitro). May act as a deubiquitinating enzyme. This Mus musculus (Mouse) protein is Josephin-2 (Josd2).